A 1159-amino-acid chain; its full sequence is Ferroxidase HEPHL1 (1159 aa).

Residues 1–23 (MFLKQPGGCILLQFLGLLGLVGA) form the signal peptide. Plastocyanin-like domains lie at 24-206 (VTRT…LLVC), 217-365 (MRTD…VGNC), 378-560 (QRRY…LLVC), 570-718 (TQKG…ISSC), 730-906 (MLRT…LITC), and 914-1092 (KGRR…VPSQ). Residues 24–1114 (VTRTYYIGIV…KNLRPRGAKA (1091 aa)) lie on the Extracellular side of the membrane. The Cu cation site is built by histidine 126 and histidine 128. Asparagine 160 carries an N-linked (GlcNAc...) asparagine glycan. An intrachain disulfide couples cysteine 180 to cysteine 206. Positions 186 and 188 each coordinate Cu cation. Asparagine 235 carries N-linked (GlcNAc...) asparagine glycosylation. A disulfide bond links cysteine 284 and cysteine 365. Residues histidine 303, cysteine 346, and histidine 351 each coordinate Cu cation. N-linked (GlcNAc...) asparagine glycosylation is present at asparagine 406. A disulfide bond links cysteine 534 and cysteine 560. N-linked (GlcNAc...) asparagine glycosylation occurs at asparagine 588. Cysteine 637 and cysteine 718 form a disulfide bridge. Positions 656, 699, 704, and 709 each coordinate Cu cation. N-linked (GlcNAc...) asparagine glycosylation occurs at asparagine 771. Cysteine 880 and cysteine 906 are joined by a disulfide. N-linked (GlcNAc...) asparagine glycosylation is present at asparagine 934. Cu cation contacts are provided by histidine 1002, histidine 1005, histidine 1007, histidine 1047, cysteine 1048, histidine 1049, histidine 1053, and methionine 1058. Residues 1115–1135 (ALVILFILGLLLLVATVVLAL) traverse the membrane as a helical segment. At 1136–1159 (RLRSSRRQMAYREVQSCALPTDAL) the chain is on the cytoplasmic side.

The protein belongs to the multicopper oxidase family. Cu cation is required as a cofactor.

It localises to the membrane. The catalysed reaction is 4 Fe(2+) + O2 + 4 H(+) = 4 Fe(3+) + 2 H2O. In terms of biological role, is a copper-binding glycoprotein with ferroxidase activity. It oxidizes Fe(2+) to Fe(3+) without releasing radical oxygen species. May be involved in the regulation of intracellular iron content. The protein is Ferroxidase HEPHL1 (Hephl1) of Mus musculus (Mouse).